The chain runs to 80 residues: uncharacterized protein (80 aa).

This is an uncharacterized protein from Escherichia coli (Bacteriophage T4).